Reading from the N-terminus, the 92-residue chain is Probable Fe(2+)-trafficking protein (92 aa).

This sequence belongs to the Fe(2+)-trafficking protein family.

In terms of biological role, could be a mediator in iron transactions between iron acquisition and iron-requiring processes, such as synthesis and/or repair of Fe-S clusters in biosynthetic enzymes. The polypeptide is Probable Fe(2+)-trafficking protein (Shewanella woodyi (strain ATCC 51908 / MS32)).